Reading from the N-terminus, the 441-residue chain is Eukaryotic peptide chain release factor subunit 1 (441 aa).

The protein belongs to the eukaryotic release factor 1 family. As to quaternary structure, heterodimer of two subunits, one of which binds GTP.

It localises to the cytoplasm. Its function is as follows. Directs the termination of nascent peptide synthesis (translation) in response to the termination codons UAA, UAG and UGA. This is Eukaryotic peptide chain release factor subunit 1 (erf1) from Dictyostelium discoideum (Social amoeba).